A 639-amino-acid chain; its full sequence is MYLNLYKIDIPKKIKRLYFYNPDMEPKLFARNLSRVNNFKFQDSNDLVWIEIPDIDFQITPKNVFQYKVEKEEIIKEEEDKKLFVKTLYKYIKKLFLDNDFYFKKGNNFISNSEVFSLDSNENVNAHLTYKIKIHNISNEYYLSILPKFTFLSKEPALESAIKSGYLYNIKSGKSFPYISGLDGILKIDIGNNQIVEVAYPENYLFNFTTRDAEKYGFSKEVHEIYKNKVFEGFKKIPKTLGFLNKITNLNENYQLKDGYKIFINVIYKFKNGESRYAKDVFKYSFYKNEQPLKAIFFFSSKKQFFEVQKSLKELFHNKHSVFYRAAAELGFSKVEFLRDSKTKSSAFLYNPEEFTVKNTEFINQIEDNVMAIVLLDKYIGNIDPLVRNFPDNLILQPILKEKLEDIKPFIIKSYVYKMGNFIPECKPFILKKMEDKEKNLYIGIDLSHDTYARKTNLCIAAVDNTGDILYIGKHKNLELNEKMNLDILEKEYIKAFEKYIEKFNVSPENVFILRDGRFIEDIEIIKNFISYNDTKYTLVEVNKNTNINSYDDLKEWIIKLDENTYIYYPKTFLNQKGVEVKILENNTDYTIEEIIEQIYLLTRVAHSTPYTNYKLPYPLHIANKVALTDYEWKLYIPY.

The N-terminal domain stretch occupies residues 1–100; it reads MYLNLYKIDI…YIKKLFLDND (100 aa). The tract at residues 101-153 is linker L1; it reads FYFKKGNNFISNSEVFSLDSNENVNAHLTYKIKIHNISNEYYLSILPKFTFLS. Positions 154–209 are PAZ domain; sequence KEPALESAIKSGYLYNIKSGKSFPYISGLDGILKIDIGNNQIVEVAYPENYLFNFT. The segment at 210-292 is linker L2; it reads TRDAEKYGFS…KYSFYKNEQP (83 aa). Residues 293–424 are mid domain; that stretch reads LKAIFFFSSK…YVYKMGNFIP (132 aa). The PIWI domain stretch occupies residues 425 to 639; sequence ECKPFILKKM…DYEWKLYIPY (215 aa). Active-site residues include Asp-446, Glu-482, Asp-516, and Asn-624. Asp-446 lines the Mn(2+) pocket. Positions 516 and 624 each coordinate Mn(2+).

This sequence belongs to the argonaute family. Long pAgo subfamily. It depends on Mn(2+) as a cofactor.

The protein resides in the cytoplasm. Its function is as follows. An RNA-guided ssDNA endonuclease that may play a role in defense against invading mobile genetic elements. Uses short 5'-OH-ssRNA sequences as guides (gRNA) to bind complementary target DNA (tDNA) or target RNA resulting in target cleavage. The cleavage site is 10 nucleotides (nt) downstream of the target residue base-paired with the 5'-end of the gRNA. Reaction rates are fastest on 5'-OH-gRNA:tDNA followed by 5'-OH-gRNA:target RNA. gRNA between 17-21 nt supports equivalent rates of cleavage, has no preferred 5'-nt. Has weak activity on tDNA with 5'-phospho-gRNA, yielding products 1-2 nt longer. Unlike other characterized prokaryotic Ago proteins symmetric mismatches centered around the cleavage site reduce cleavage efficiency. The polypeptide is Protein argonaute (Marinitoga piezophila (strain DSM 14283 / JCM 11233 / KA3)).